The sequence spans 520 residues: Tetratricopeptide repeat protein 6 (520 aa).

TPR repeat units follow at residues Met-57–Ser-90, Ala-101–Ser-138, Tyr-139–Glu-172, Leu-176–Asn-209, Gly-210–Phe-243, Asp-245–Tyr-280, Ile-281–Asn-314, Gly-320–Thr-347, Ala-348–Tyr-381, Ser-382–Asn-415, Glu-416–Trp-449, Ala-450–Asp-483, and Ala-484–Ala-517.

This is Tetratricopeptide repeat protein 6 from Homo sapiens (Human).